The sequence spans 1159 residues: Protocadherin-17 (1159 aa).

The N-terminal stretch at 1 to 17 (MYLSICCCFLLWAPALT) is a signal peptide. Cadherin domains lie at 18–132 (LKNL…APSF), 133–243 (SSDQ…SPVF), 244–351 (EAPS…APSI), 353–472 (FVSV…PPRF), 473–583 (TKGL…APVI), and 589–695 (QNDT…VPRV). Over 18 to 707 (LKNLNYSVPE…EQHHWDMSLP (690 aa)) the chain is Extracellular. Residue Asn22 is glycosylated (N-linked (GlcNAc...) asparagine). The short motif at 186-188 (RGD) is the Cell attachment site element. 6 N-linked (GlcNAc...) asparagine glycosylation sites follow: Asn266, Asn439, Asn453, Asn504, Asn566, and Asn590. Residues 708-728 (LIVTLSTISIILLAAMITIAV) traverse the membrane as a helical segment. The Cytoplasmic portion of the chain corresponds to 729–1159 (KCKRENKEIR…RGNDPVAVRK (431 aa)). Disordered regions lie at residues 858–909 (NFPA…KGSC) and 1108–1132 (SRDS…GRES). Residues 867–879 (GSRQQFVQSSSTF) are compositionally biased toward polar residues. Composition is skewed to basic and acidic residues over residues 880 to 895 (KDPE…HGDS) and 1120 to 1132 (QLDH…GRES).

The protein localises to the cell membrane. Potential calcium-dependent cell-adhesion protein. The protein is Protocadherin-17 (PCDH17) of Homo sapiens (Human).